A 712-amino-acid chain; its full sequence is Sterol uptake control protein 2 (712 aa).

Over residues Met1–Phe19 the composition is skewed to polar residues. A disordered region spans residues Met1–Asn52. A compositionally biased stretch (basic residues) spans Lys35–Ser50. Residues Cys54–Cys81 constitute a DNA-binding region (zn(2)-C6 fungal-type). Disordered regions lie at residues Lys95 to Pro150 and Thr236 to Leu342. 3 stretches are compositionally biased toward polar residues: residues Ser113–Lys143, Arg252–Pro306, and Lys326–Ile337.

It is found in the nucleus. In terms of biological role, transcription factor involved in the regulation of ergosterol biosynthetic genes such as ERG2 and ERG11 through direct binding to sterol response elements (SREs) in the promoters. Also binds to its own promoter on 2 cis-acting elements to promote autoregulation. Regulates sterol uptake across the plasma membrane. Acts as a major regulator of ascorbic acid-induced response. Plays a role in the triggering of pyroptosis, an inflammasome-mediated programmed cell death pathway in macrophages, allowing macrophages escaping. This chain is Sterol uptake control protein 2, found in Candida albicans (strain SC5314 / ATCC MYA-2876) (Yeast).